A 178-amino-acid chain; its full sequence is Thymidine kinase (178 aa).

An ATP-binding site is contributed by 13–20 (GPMFAGKS). Glu-85 acts as the Proton acceptor in catalysis. A substrate-binding site is contributed by Phe-115. Positions 140 and 143 each coordinate Zn(2+). Position 159 to 163 (159 to 163 (IEIIG)) interacts with substrate. Residues Cys-172 and Cys-175 each contribute to the Zn(2+) site.

The protein belongs to the thymidine kinase family.

The enzyme catalyses thymidine + ATP = dTMP + ADP + H(+). In Myxoma virus (strain Uriarra) (MYXV), this protein is Thymidine kinase (TK).